The following is a 121-amino-acid chain: UPF0102 protein Strop_1320 (121 aa).

The protein belongs to the UPF0102 family.

The chain is UPF0102 protein Strop_1320 from Salinispora tropica (strain ATCC BAA-916 / DSM 44818 / JCM 13857 / NBRC 105044 / CNB-440).